Reading from the N-terminus, the 354-residue chain is 3-isopropylmalate dehydrogenase (354 aa).

73-86 (GPAYDKLDRPLRPE) contributes to the NAD(+) binding site. Residues arginine 93, arginine 103, arginine 131, and aspartate 221 each coordinate substrate. Residues aspartate 221, aspartate 245, and aspartate 249 each coordinate Mg(2+). An NAD(+)-binding site is contributed by 279–291 (GSAPDIAGQNLAN).

Belongs to the isocitrate and isopropylmalate dehydrogenases family. LeuB type 1 subfamily. As to quaternary structure, homodimer. The cofactor is Mg(2+). Mn(2+) serves as cofactor.

It is found in the cytoplasm. It catalyses the reaction (2R,3S)-3-isopropylmalate + NAD(+) = 4-methyl-2-oxopentanoate + CO2 + NADH. It functions in the pathway amino-acid biosynthesis; L-leucine biosynthesis; L-leucine from 3-methyl-2-oxobutanoate: step 3/4. Its function is as follows. Catalyzes the oxidation of 3-carboxy-2-hydroxy-4-methylpentanoate (3-isopropylmalate) to 3-carboxy-4-methyl-2-oxopentanoate. The product decarboxylates to 4-methyl-2 oxopentanoate. The polypeptide is 3-isopropylmalate dehydrogenase (Chromobacterium violaceum (strain ATCC 12472 / DSM 30191 / JCM 1249 / CCUG 213 / NBRC 12614 / NCIMB 9131 / NCTC 9757 / MK)).